We begin with the raw amino-acid sequence, 378 residues long: Glutamate 5-kinase 1 (378 aa).

Lys-13 is an ATP binding site. Substrate-binding residues include Ser-53, Asp-140, and Asn-152. Residue Ser-172 to Asp-173 coordinates ATP. The PUA domain occupies Ala-278 to Glu-355.

This sequence belongs to the glutamate 5-kinase family.

The protein localises to the cytoplasm. It catalyses the reaction L-glutamate + ATP = L-glutamyl 5-phosphate + ADP. It participates in amino-acid biosynthesis; L-proline biosynthesis; L-glutamate 5-semialdehyde from L-glutamate: step 1/2. Functionally, catalyzes the transfer of a phosphate group to glutamate to form L-glutamate 5-phosphate. The sequence is that of Glutamate 5-kinase 1 from Mesorhizobium japonicum (strain LMG 29417 / CECT 9101 / MAFF 303099) (Mesorhizobium loti (strain MAFF 303099)).